The following is a 505-amino-acid chain: Glutamate--tRNA ligase (505 aa).

The 'HIGH' region motif lies at 12–22 (PSPTGDPHVGT). The 'KMSKS' region motif lies at 253–257 (KLSKR). Lys256 is an ATP binding site.

The protein belongs to the class-I aminoacyl-tRNA synthetase family. Glutamate--tRNA ligase type 1 subfamily. Monomer.

The protein resides in the cytoplasm. It carries out the reaction tRNA(Glu) + L-glutamate + ATP = L-glutamyl-tRNA(Glu) + AMP + diphosphate. In terms of biological role, catalyzes the attachment of glutamate to tRNA(Glu) in a two-step reaction: glutamate is first activated by ATP to form Glu-AMP and then transferred to the acceptor end of tRNA(Glu). This Chlamydophila psittaci (strain ATCC VR-125 / 6BC) (Chlamydia psittaci) protein is Glutamate--tRNA ligase.